We begin with the raw amino-acid sequence, 248 residues long: Triosephosphate isomerase (248 aa).

Substrate is bound at residue 9–11 (NWK). The active-site Electrophile is H94. The Proton acceptor role is filled by E166. Residues G172, S212, and 233-234 (GG) each bind substrate.

Belongs to the triosephosphate isomerase family. In terms of assembly, homodimer.

The protein localises to the cytoplasm. It catalyses the reaction D-glyceraldehyde 3-phosphate = dihydroxyacetone phosphate. The protein operates within carbohydrate biosynthesis; gluconeogenesis. It participates in carbohydrate degradation; glycolysis; D-glyceraldehyde 3-phosphate from glycerone phosphate: step 1/1. Involved in the gluconeogenesis. Catalyzes stereospecifically the conversion of dihydroxyacetone phosphate (DHAP) to D-glyceraldehyde-3-phosphate (G3P). This is Triosephosphate isomerase from Clostridium botulinum (strain Eklund 17B / Type B).